A 584-amino-acid polypeptide reads, in one-letter code: 2-isopropylmalate synthase (584 aa).

In terms of domain architecture, Pyruvate carboxyltransferase spans 45–323 (PRWLSTDLRD…SPNLDFSKLD (279 aa)). A divalent metal cation-binding residues include Asp54, His262, His264, and Asn298.

This sequence belongs to the alpha-IPM synthase/homocitrate synthase family. LeuA type 2 subfamily. Homodimer. A divalent metal cation serves as cofactor.

The enzyme catalyses 3-methyl-2-oxobutanoate + acetyl-CoA + H2O = (2S)-2-isopropylmalate + CoA + H(+). It participates in amino-acid biosynthesis; L-leucine biosynthesis; L-leucine from 3-methyl-2-oxobutanoate: step 1/4. Functionally, catalyzes the condensation of the acetyl group of acetyl-CoA with 3-methyl-2-oxobutanoate (2-oxoisovalerate) to form 3-carboxy-3-hydroxy-4-methylpentanoate (2-isopropylmalate). In Schizosaccharomyces pombe (strain 972 / ATCC 24843) (Fission yeast), this protein is 2-isopropylmalate synthase (leu3).